The primary structure comprises 85 residues: Acyl carrier protein (85 aa).

The Carrier domain occupies 2–78 (SQISERVIDL…DAIAYIESHA (77 aa)). Residue S37 is modified to O-(pantetheine 4'-phosphoryl)serine.

Belongs to the acyl carrier protein (ACP) family. 4'-phosphopantetheine is transferred from CoA to a specific serine of apo-ACP by AcpS. This modification is essential for activity because fatty acids are bound in thioester linkage to the sulfhydryl of the prosthetic group.

It localises to the cytoplasm. Its pathway is lipid metabolism; fatty acid biosynthesis. Its function is as follows. Carrier of the growing fatty acid chain in fatty acid biosynthesis. The chain is Acyl carrier protein from Azobacteroides pseudotrichonymphae genomovar. CFP2.